Consider the following 162-residue polypeptide: Tegument protein BLRF2 (162 aa).

Residues 12 to 43 (VKAVDMSMEDMAARLARLESENKALKQQVLRG) are a coiled coil. Positions 121–162 (GAKGQPSPGEGTRLRESNDPNATRRARSRSRGREAKKVQISD) are disordered. Residues 151–162 (RGREAKKVQISD) show a composition bias toward basic and acidic residues.

Belongs to the herpesviridae BLRF2 family. Homooligomer; homooligomerizes and binds double-stranded DNA (dsDNA) cooperatively. Interacts with host CGAS.

It localises to the virion tegument. The protein resides in the host cytoplasm. Plays a role in the inhibition of host innate immune system by targeting the CGAS enzymatic activity which is the principal cytosolic DNA sensor that detects invading viral DNA. Acts by inhibiting CGAS-DNA phase separation: directly binds double-stranded DNA (dsDNA) in a length dependent but sequence independent manner and is able to form DNA-induced phase separation in infected cells. DNA phase separation of ORF52 mediates disruption of liquid-like droplets in which CGAS is activated, thereby preventing CGAS activity. This is Tegument protein BLRF2 from Epstein-Barr virus (strain GD1) (HHV-4).